The primary structure comprises 136 residues: Large ribosomal subunit protein uL16 (136 aa).

It belongs to the universal ribosomal protein uL16 family. As to quaternary structure, part of the 50S ribosomal subunit.

Its function is as follows. Binds 23S rRNA and is also seen to make contacts with the A and possibly P site tRNAs. The chain is Large ribosomal subunit protein uL16 from Orientia tsutsugamushi (strain Ikeda) (Rickettsia tsutsugamushi).